The following is a 92-amino-acid chain: Elongation factor 1-beta (92 aa).

It belongs to the EF-1-beta/EF-1-delta family.

Promotes the exchange of GDP for GTP in EF-1-alpha/GDP, thus allowing the regeneration of EF-1-alpha/GTP that could then be used to form the ternary complex EF-1-alpha/GTP/AAtRNA. This is Elongation factor 1-beta from Korarchaeum cryptofilum (strain OPF8).